Consider the following 258-residue polypeptide: Acetylglutamate kinase (258 aa).

Residues 41–42 (GG), R63, and N156 each bind substrate.

The protein belongs to the acetylglutamate kinase family. ArgB subfamily.

Its subcellular location is the cytoplasm. It carries out the reaction N-acetyl-L-glutamate + ATP = N-acetyl-L-glutamyl 5-phosphate + ADP. It functions in the pathway amino-acid biosynthesis; L-arginine biosynthesis; N(2)-acetyl-L-ornithine from L-glutamate: step 2/4. In terms of biological role, catalyzes the ATP-dependent phosphorylation of N-acetyl-L-glutamate. The protein is Acetylglutamate kinase of Bacillus pumilus (strain SAFR-032).